The sequence spans 167 residues: Small ribosomal subunit protein uS5 (167 aa).

Residues 12-75 (LQEKLIAVNR…EKARRNMVTV (64 aa)) enclose the S5 DRBM domain.

Belongs to the universal ribosomal protein uS5 family. As to quaternary structure, part of the 30S ribosomal subunit. Contacts proteins S4 and S8.

Its function is as follows. With S4 and S12 plays an important role in translational accuracy. Functionally, located at the back of the 30S subunit body where it stabilizes the conformation of the head with respect to the body. In Shewanella sp. (strain W3-18-1), this protein is Small ribosomal subunit protein uS5.